Reading from the N-terminus, the 141-residue chain is Large ribosomal subunit protein uL23B (141 aa).

Positions 1 to 22 are disordered; it reads MSVGKAKGAQKTVQKGIHNKVA.

Belongs to the universal ribosomal protein uL23 family. As to quaternary structure, component of the large ribosomal subunit (LSU). Mature yeast ribosomes consist of a small (40S) and a large (60S) subunit. The 40S small subunit contains 1 molecule of ribosomal RNA (18S rRNA) and at least 33 different proteins. The large 60S subunit contains 3 rRNA molecules (25S, 5.8S and 5S rRNA) and at least 46 different proteins. uL23 is associated with the polypeptide exit tunnel.

It localises to the cytoplasm. Its function is as follows. This protein binds to a specific region on the 26S rRNA. Functionally, component of the ribosome, a large ribonucleoprotein complex responsible for the synthesis of proteins in the cell. The small ribosomal subunit (SSU) binds messenger RNAs (mRNAs) and translates the encoded message by selecting cognate aminoacyl-transfer RNA (tRNA) molecules. The large subunit (LSU) contains the ribosomal catalytic site termed the peptidyl transferase center (PTC), which catalyzes the formation of peptide bonds, thereby polymerizing the amino acids delivered by tRNAs into a polypeptide chain. The nascent polypeptides leave the ribosome through a tunnel in the LSU and interact with protein factors that function in enzymatic processing, targeting, and the membrane insertion of nascent chains at the exit of the ribosomal tunnel. uL23 is a major component of the universal docking site for these factors at the polypeptide exit tunnel. The sequence is that of Large ribosomal subunit protein uL23B (rpl2502) from Schizosaccharomyces pombe (strain 972 / ATCC 24843) (Fission yeast).